Consider the following 73-residue polypeptide: Long neurotoxin 2 (73 aa).

Cystine bridges form between C3-C21, C14-C42, C27-C31, C46-C57, and C58-C63.

Belongs to the three-finger toxin family. Long-chain subfamily. Type II alpha-neurotoxin sub-subfamily. As to expression, expressed by the venom gland.

Its subcellular location is the secreted. Its function is as follows. Binds with high affinity to muscular (alpha-1/CHRNA1) and neuronal (alpha-7/CHRNA7) nicotinic acetylcholine receptor (nAChR) and inhibits acetylcholine from binding to the receptor, thereby impairing neuromuscular and neuronal transmission. This is Long neurotoxin 2 from Ophiophagus hannah (King cobra).